Reading from the N-terminus, the 534-residue chain is CD276 antigen (534 aa).

The N-terminal stretch at 1 to 28 (MLRRRGSPGMGVHVGAALGALWFCLTGA) is a signal peptide. The Ig-like V-type 1 domain occupies 29 to 139 (LEVQVPEDPV…GSAAVSLQVA (111 aa)). Residues 29-466 (LEVQVPEDPV…GQPMTFPPEA (438 aa)) are Extracellular-facing. 4 disulfides stabilise this stretch: Cys50–Cys122, Cys165–Cys220, Cys268–Cys340, and Cys383–Cys438. Asn104, Asn189, Asn215, Asn322, Asn407, and Asn433 each carry an N-linked (GlcNAc...) asparagine glycan. In terms of domain architecture, Ig-like C2-type 1 spans 145–238 (PSMTLEPNKD…QDAHSSVTIT (94 aa)). Residues 243 to 357 (PTGAVEVQVP…GSAAVSLQVA (115 aa)) form the Ig-like V-type 2 domain. The 94-residue stretch at 363-456 (PSMTLEPNKD…QDAHGSVTIT (94 aa)) folds into the Ig-like C2-type 2 domain. A helical transmembrane segment spans residues 467 to 487 (LWVTVGLSVCLIALLVALAFV). The Cytoplasmic portion of the chain corresponds to 488–534 (CWRKIKQSCEEENAGAEDQDGEGEGSKTALQPLKHSDSKEDDGQEIA). A compositionally biased stretch (acidic residues) spans 498–510 (EENAGAEDQDGEG). The disordered stretch occupies residues 498-534 (EENAGAEDQDGEGEGSKTALQPLKHSDSKEDDGQEIA). Ser525 carries the post-translational modification Phosphoserine.

It belongs to the immunoglobulin superfamily. BTN/MOG family. As to quaternary structure, interacts with TREML2 and this interaction enhances T-cell activation. As to expression, ubiquitous but not detectable in peripheral blood lymphocytes or granulocytes. Weakly expressed in resting monocytes. Expressed in dendritic cells derived from monocytes. Expressed in epithelial cells of sinonasal tissue. Expressed in extravillous trophoblast cells and Hofbauer cells of the first trimester placenta and term placenta.

The protein localises to the membrane. In terms of biological role, may participate in the regulation of T-cell-mediated immune response. May play a protective role in tumor cells by inhibiting natural-killer mediated cell lysis as well as a role of marker for detection of neuroblastoma cells. May be involved in the development of acute and chronic transplant rejection and in the regulation of lymphocytic activity at mucosal surfaces. Could also play a key role in providing the placenta and fetus with a suitable immunological environment throughout pregnancy. Both isoform 1 and isoform 2 appear to be redundant in their ability to modulate CD4 T-cell responses. Isoform 2 is shown to enhance the induction of cytotoxic T-cells and selectively stimulates interferon gamma production in the presence of T-cell receptor signaling. This is CD276 antigen (CD276) from Homo sapiens (Human).